The chain runs to 138 residues: Basic phospholipase A2 homolog MjTX-I (138 aa).

The N-terminal stretch at 1-16 (MRTLWIMAVLLVGVEG) is a signal peptide. Val34 serves as a coordination point for suramin. 7 disulfides stabilise this stretch: Cys42–Cys132, Cys44–Cys60, Cys59–Cys111, Cys65–Cys138, Cys66–Cys104, Cys73–Cys97, and Cys91–Cys102. Residue Asn43 coordinates varespladib. Positions 45 and 48 each coordinate suramin. Residues His63 and Lys64 each contribute to the varespladib site. Position 85 (Lys85) interacts with suramin.

The protein belongs to the phospholipase A2 family. Group II subfamily. K49 sub-subfamily. In terms of assembly, monomer in solution. Homodimer; non-covalently linked (probable conventional/extended dimer conformation). Homotetramer (dimer of homodimer (probable conventional/extended dimer conformation)); non-covalently linked. Homooligomer. As to expression, expressed by the venom gland.

It is found in the secreted. With respect to regulation, myotoxin activity is inhibited by suramin and varespladib. Inhibition by suramin may be caused by (i) distortion of MDiS from both monomers impairing the membrane disruption mechanism by the toxin and (ii) surface electrostatic changes of the complex that interfere with the toxin membrane dockage process (putative-MDoS is partially hidden). Inhibition by varespladib is probably through varespladib binding to MDoS. Its function is as follows. Snake venom phospholipase A2 homolog that lacks enzymatic activity. In vivo, it displays local myotoxin and edema-inducing activities and is lethal by intraperitoneal injection. The myotoxicity effect is weaker in comparison to other myotoxins, probably due to the formation of high molecular weight complexes and to the oligomeric conformation (conventional dimer). It shows specificity toward neurons and myotubes, but not on a variety of other cell types. This PLA2 excites a cohort of sensory neurons via ATP release and consequent activation of P2RX2 and/or P2RX3 purinergic receptors. Pannexin hemichannels act as downstream mediators of toxin-evoked ATP release. In vivo, it elicits nonneurogenic inflammatory pain, thermal hyperalgesia, and mechanical allodynia, of which the latter is completely dependent on purinergic signaling. This chain is Basic phospholipase A2 homolog MjTX-I, found in Bothrops moojeni (Lance-headed viper).